Consider the following 226-residue polypeptide: Urease accessory protein UreF (226 aa).

It belongs to the UreF family. As to quaternary structure, ureD, UreF and UreG form a complex that acts as a GTP-hydrolysis-dependent molecular chaperone, activating the urease apoprotein by helping to assemble the nickel containing metallocenter of UreC. The UreE protein probably delivers the nickel.

The protein resides in the cytoplasm. Its function is as follows. Required for maturation of urease via the functional incorporation of the urease nickel metallocenter. The chain is Urease accessory protein UreF from Burkholderia ambifaria (strain ATCC BAA-244 / DSM 16087 / CCUG 44356 / LMG 19182 / AMMD) (Burkholderia cepacia (strain AMMD)).